We begin with the raw amino-acid sequence, 677 residues long: WD repeat-containing protein 48 (677 aa).

Y28 is modified (phosphotyrosine). WD repeat units lie at residues 28 to 67, 73 to 112, 115 to 154, 166 to 205, 208 to 247, 250 to 289, 292 to 334, and 358 to 452; these read YNRN…QDPY, HHTD…CMST, THKD…ALTA, GNKD…KLMK, GHTD…CIAT, VHDE…IRVL, EEKA…NFRA, and KGGA…GFSS. K214 carries the N6-acetyllysine modification. K578 is subject to N6-acetyllysine. The tract at residues 607-628 is disordered; that stretch reads LDNESQTTSSSNNEKPGEQEKE. Low complexity predominate over residues 609 to 620; the sequence is NESQTTSSSNNE. The residue at position 613 (T613) is a Phosphothreonine.

Belongs to the WD repeat WDR48 family. In terms of assembly, interacts with USP46. Interacts with USP1. Interacts with USP12. Component of the USP12-WDR20-WDR48 deubiquitinating complex. Component of the USP12-DMWD-WDR48 deubiquitinating complex. Interacts with PHLPP1. Interacts with RAD51AP1; the interaction is direct and promotes formation of a trimeric complex with RAD51 via RAD51AP1. Interacts with ATAD5; the interaction regulates USP1-mediated PCNA deubiquitination. Interacts with RAD51; the interaction is enhanced under replication stress. Interacts with ITCH; the interaction is more efficient when both USP12 and WDR48/UAF1 are involved and may facilitate recruitment of the USP12 deubiquitinating complex to Notch.

The protein localises to the nucleus. It is found in the cytoplasm. It localises to the lysosome. Its subcellular location is the late endosome. Regulator of deubiquitinating complexes, which acts as a strong activator of USP1, USP12 and USP46. Enhances the USP1-mediated deubiquitination of FANCD2; USP1 being almost inactive by itself. Activates deubiquitination by increasing the catalytic turnover without increasing the affinity of deubiquitinating enzymes for the substrate. Also activates deubiquitinating activity of complexes containing USP12. Docks at the distal end of the USP12 fingers domain and induces a cascade of structural changes leading to the activation of the enzyme. Together with RAD51AP1, promotes DNA repair by stimulating RAD51-mediated homologous recombination. Binds single-stranded DNA (ssDNA) and double-stranded DNA (dsDNA). DNA-binding is required both for USP1-mediated deubiquitination of FANCD2 and stimulation of RAD51-mediated homologous recombination: both WDR48/UAF1 and RAD51AP1 have coordinated role in DNA-binding during these processes. Together with ATAD5 and by regulating USP1 activity, has a role in PCNA-mediated translesion synthesis (TLS) by deubiquitinating monoubiquitinated PCNA. Together with ATAD5, has a role in recruiting RAD51 to stalled forks during replication stress. The chain is WD repeat-containing protein 48 (WDR48) from Pongo abelii (Sumatran orangutan).